The following is a 164-amino-acid chain: MTTETAPITLYVDADACPVKDEIYRVAIRHGLAVIVVAGGFIRVPDDPLITRVAAGSGMDAADDWIAEHTGPDDIVITADIPLASRCVKAGSAVIAPNGKPFTEESMGMTLAVRNLMTDLRSSGEVTGGPRSFTPRDRSTFLSTLDTTIRRVQRQRAARIQQQS.

This sequence belongs to the UPF0178 family.

This chain is UPF0178 protein BRADO3147, found in Bradyrhizobium sp. (strain ORS 278).